The sequence spans 200 residues: NAD(P)H dehydrogenase (quinone) (200 aa).

The Flavodoxin-like domain maps to 4–191 (VLVLYYSSYG…DIARYQGKHV (188 aa)). FMN-binding positions include 10–15 (SSYGHV) and 79–81 (TRF). Residue Y12 coordinates NAD(+). Residue W99 coordinates substrate. FMN contacts are provided by residues 114–120 (STGTQHG) and H135.

The protein belongs to the WrbA family. Requires FMN as cofactor.

The enzyme catalyses a quinone + NADH + H(+) = a quinol + NAD(+). It catalyses the reaction a quinone + NADPH + H(+) = a quinol + NADP(+). This is NAD(P)H dehydrogenase (quinone) from Burkholderia cenocepacia (strain HI2424).